The chain runs to 681 residues: Probable L-type lectin-domain containing receptor kinase VII.2 (681 aa).

An N-terminal signal peptide occupies residues 1-23 (MFSKVSILLFSLASLLLFRSTTG). A legume-lectin like region spans residues 24 to 260 (IEFIYNSNFT…SHRILSWSFS (237 aa)). Over 24-290 (IEFIYNSNFT…SGDSVLKSKG (267 aa)) the chain is Extracellular. N-linked (GlcNAc...) asparagine glycosylation is found at asparagine 31, asparagine 42, asparagine 56, asparagine 72, asparagine 126, asparagine 202, asparagine 207, asparagine 228, and asparagine 263. A helical transmembrane segment spans residues 291–311 (FIAGVSSGVVLLVSVIGLLCF). Residues 312 to 681 (YVVRRRRQRL…QTYDSILHGR (370 aa)) are Cytoplasmic-facing. In terms of domain architecture, Protein kinase spans 349–624 (FSDENMIGYG…VVQILEQGRL (276 aa)). ATP contacts are provided by residues 355-363 (IGYGGNSKV) and lysine 376. Aspartate 475 acts as the Proton acceptor in catalysis.

The protein in the C-terminal section; belongs to the protein kinase superfamily. Ser/Thr protein kinase family. It in the N-terminal section; belongs to the leguminous lectin family.

It localises to the cell membrane. The catalysed reaction is L-seryl-[protein] + ATP = O-phospho-L-seryl-[protein] + ADP + H(+). The enzyme catalyses L-threonyl-[protein] + ATP = O-phospho-L-threonyl-[protein] + ADP + H(+). The chain is Probable L-type lectin-domain containing receptor kinase VII.2 (LECRK72) from Arabidopsis thaliana (Mouse-ear cress).